Reading from the N-terminus, the 383-residue chain is Cytochrome b (383 aa).

Helical transmembrane passes span 34 to 54 (FGSL…FLMM), 78 to 99 (WLIR…FLHI), 114 to 134 (WNVG…GYVL), and 179 to 199 (FTAL…THLI). Heme b is bound by residues His-84 and His-98. His-183 and His-197 together coordinate heme b. His-202 is a binding site for a ubiquinone. Transmembrane regions (helical) follow at residues 227-247 (MKDV…ALYL), 289-309 (LGGV…PFLH), 321-341 (LSQL…WIGG), and 348-368 (YILL…ILMP).

This sequence belongs to the cytochrome b family. The cytochrome bc1 complex contains 3 respiratory subunits (MT-CYB, CYC1 and UQCRFS1), 2 core proteins (UQCRC1 and UQCRC2) and probably 6 low-molecular weight proteins. Heme b serves as cofactor.

The protein localises to the mitochondrion inner membrane. Component of the ubiquinol-cytochrome c reductase complex (complex III or cytochrome b-c1 complex) that is part of the mitochondrial respiratory chain. The b-c1 complex mediates electron transfer from ubiquinol to cytochrome c. Contributes to the generation of a proton gradient across the mitochondrial membrane that is then used for ATP synthesis. This is Cytochrome b (MT-CYB) from Caiman crocodilus (Spectacled caiman).